Reading from the N-terminus, the 226-residue chain is Phosphatidylserine decarboxylase proenzyme (226 aa).

Residue serine 184 is the Schiff-base intermediate with substrate; via pyruvic acid of the active site. A Pyruvic acid (Ser); by autocatalysis modification is found at serine 184.

This sequence belongs to the phosphatidylserine decarboxylase family. PSD-A subfamily. In terms of assembly, heterodimer of a large membrane-associated beta subunit and a small pyruvoyl-containing alpha subunit. Pyruvate serves as cofactor. In terms of processing, is synthesized initially as an inactive proenzyme. Formation of the active enzyme involves a self-maturation process in which the active site pyruvoyl group is generated from an internal serine residue via an autocatalytic post-translational modification. Two non-identical subunits are generated from the proenzyme in this reaction, and the pyruvate is formed at the N-terminus of the alpha chain, which is derived from the carboxyl end of the proenzyme. The post-translation cleavage follows an unusual pathway, termed non-hydrolytic serinolysis, in which the side chain hydroxyl group of the serine supplies its oxygen atom to form the C-terminus of the beta chain, while the remainder of the serine residue undergoes an oxidative deamination to produce ammonia and the pyruvoyl prosthetic group on the alpha chain.

The protein resides in the cell membrane. It catalyses the reaction a 1,2-diacyl-sn-glycero-3-phospho-L-serine + H(+) = a 1,2-diacyl-sn-glycero-3-phosphoethanolamine + CO2. The protein operates within phospholipid metabolism; phosphatidylethanolamine biosynthesis; phosphatidylethanolamine from CDP-diacylglycerol: step 2/2. Catalyzes the formation of phosphatidylethanolamine (PtdEtn) from phosphatidylserine (PtdSer). In Ehrlichia canis (strain Jake), this protein is Phosphatidylserine decarboxylase proenzyme.